Reading from the N-terminus, the 499-residue chain is Eukaryotic peptide chain release factor GTP-binding subunit ERF3A (499 aa).

The disordered stretch occupies residues Met-1–Ala-69. Residues Arg-41–Met-50 show a composition bias toward basic and acidic residues. Positions Lys-72 to Val-298 constitute a tr-type G domain. The interval Gly-81–Ser-88 is G1. GTP is bound at residue Asp-84 to Thr-89. The interval Gly-137–Glu-141 is G2. The G3 stretch occupies residues Asp-158–Gly-161. GTP is bound by residues Asn-220–Asp-223 and Ser-262–Leu-264. Residues Asn-220–Asp-223 are G4. The segment at Ser-262–Leu-264 is G5.

The protein belongs to the TRAFAC class translation factor GTPase superfamily. Classic translation factor GTPase family. ERF3 subfamily. As to quaternary structure, component of the eRF1-eRF3-GTP ternary complex, composed of ETF1/ERF1 and ERF3 (GSPT1/ERF3A or GSPT2/ERF3B) and GTP. Component of the transient SURF (SMG1-UPF1-eRF1-eRF3) complex. The ETF1-GSPT1 complex interacts with JMJD4. Interacts with PABPC1. Interacts with SHFL.

The catalysed reaction is GTP + H2O = GDP + phosphate + H(+). Functionally, GTPase component of the eRF1-eRF3-GTP ternary complex, a ternary complex that mediates translation termination in response to the termination codons UAA, UAG and UGA. GSPT1/ERF3A mediates ETF1/ERF1 delivery to stop codons: The eRF1-eRF3-GTP complex binds to a stop codon in the ribosomal A-site. GTP hydrolysis by GSPT1/ERF3A induces a conformational change that leads to its dissociation, permitting ETF1/ERF1 to accommodate fully in the A-site. Component of the transient SURF complex which recruits UPF1 to stalled ribosomes in the context of nonsense-mediated decay (NMD) of mRNAs containing premature stop codons. Required for SHFL-mediated translation termination which inhibits programmed ribosomal frameshifting (-1PRF) of mRNA from viruses and cellular genes. The chain is Eukaryotic peptide chain release factor GTP-binding subunit ERF3A (GSPT1) from Homo sapiens (Human).